The sequence spans 127 residues: Large-conductance mechanosensitive channel (127 aa).

A run of 3 helical transmembrane segments spans residues 9–29 (EFAM…GVAF), 32–52 (IVTA…LGGV), and 75–95 (VIDF…INLL).

The protein belongs to the MscL family. As to quaternary structure, homopentamer.

The protein resides in the cell inner membrane. Channel that opens in response to stretch forces in the membrane lipid bilayer. May participate in the regulation of osmotic pressure changes within the cell. The sequence is that of Large-conductance mechanosensitive channel from Legionella pneumophila (strain Lens).